Here is a 777-residue protein sequence, read N- to C-terminus: Rho-GTPase-activating protein 8 (777 aa).

Residues 3–420 form the F-BAR domain; that stretch reads SSFSNGFWSK…YQEIIQPESD (418 aa). The stretch at 117–172 forms a coiled coil; the sequence is QKLQTSQQVLTNQIKSYEKKYYTLKKTKSAYYNKCRNLEDYEEESKESNETTSEAI. Positions 213–296 constitute a DEP domain; it reads VLQEIPLQDY…WKDKAFQFAG (84 aa). Residues 454–650 form the Rho-GAP domain; that stretch reads VDVEFLSHRD…DLLTYGPSIF (197 aa). The segment at 667–709 is disordered; sequence LYQSSATPRSTDVSPTRPDSISSVRSHTAVESPRSSFEELQPS. Residues 668-692 show a composition bias toward polar residues; the sequence is YQSSATPRSTDVSPTRPDSISSVRS. Phosphoserine is present on residues Ser-676 and Ser-680. The residue at position 682 (Thr-682) is a Phosphothreonine. Position 686 is a phosphoserine (Ser-686). Thr-694 is modified (phosphothreonine). Position 698 is a phosphoserine (Ser-698).

Interacts with pak1/shk1. In terms of processing, phosphorylated by pak1/shk1.

The protein localises to the cytoplasm. Acts in signal transduction. Negatively regulates the pak1/shk1 control pathway. This is Rho-GTPase-activating protein 8 (rga8) from Schizosaccharomyces pombe (strain 972 / ATCC 24843) (Fission yeast).